Reading from the N-terminus, the 45-residue chain is Large ribosomal subunit protein bL36 (45 aa).

Residues 1-45 are disordered; the sequence is MKVSSSIKADPSKGDKLVRRKGRLYVINKKDPNRKQRQAGPARKK.

It belongs to the bacterial ribosomal protein bL36 family.

The protein is Large ribosomal subunit protein bL36 of Chlamydia caviae (strain ATCC VR-813 / DSM 19441 / 03DC25 / GPIC) (Chlamydophila caviae).